Here is a 156-residue protein sequence, read N- to C-terminus: S-ribosylhomocysteine lyase (156 aa).

Fe cation-binding residues include H56, H60, and C123.

This sequence belongs to the LuxS family. In terms of assembly, homodimer. Requires Fe cation as cofactor.

The catalysed reaction is S-(5-deoxy-D-ribos-5-yl)-L-homocysteine = (S)-4,5-dihydroxypentane-2,3-dione + L-homocysteine. In terms of biological role, involved in the synthesis of autoinducer 2 (AI-2) which is secreted by bacteria and is used to communicate both the cell density and the metabolic potential of the environment. The regulation of gene expression in response to changes in cell density is called quorum sensing. Catalyzes the transformation of S-ribosylhomocysteine (RHC) to homocysteine (HC) and 4,5-dihydroxy-2,3-pentadione (DPD). This Staphylococcus epidermidis (strain ATCC 35984 / DSM 28319 / BCRC 17069 / CCUG 31568 / BM 3577 / RP62A) protein is S-ribosylhomocysteine lyase.